A 352-amino-acid chain; its full sequence is NADP-dependent isopropanol dehydrogenase (352 aa).

Positions 37, 59, and 150 each coordinate Zn(2+). NADP(+) is bound by residues 175–178 (IGPV), 198–200 (GSR), Y218, 265–267 (VNY), and K340.

This sequence belongs to the zinc-containing alcohol dehydrogenase family. In terms of assembly, homotetramer. It depends on Zn(2+) as a cofactor.

The enzyme catalyses propan-2-ol + NADP(+) = acetone + NADPH + H(+). Alcohol dehydrogenase with a preference for medium chain secondary alcohols, such as 2-butanol and isopropanol. Has very low activity with primary alcohols, such as ethanol. Under physiological conditions, the enzyme reduces aldehydes and 2-ketones to produce secondary alcohols. Is also active with acetaldehyde and propionaldehyde. The polypeptide is NADP-dependent isopropanol dehydrogenase (adh) (Thermoanaerobacter brockii (Thermoanaerobium brockii)).